A 391-amino-acid chain; its full sequence is Metallophosphoesterase 1 (391 aa).

A helical transmembrane segment spans residues 25 to 45 (TVVIISVLLFCEYFIYHLVIF). Residues aspartate 72, aspartate 114, asparagine 152, histidine 244, histidine 298, and histidine 300 each contribute to the a divalent metal cation site. A helical transmembrane segment spans residues 352–372 (VLATYGAAAVFLVVLILAHLE).

This sequence belongs to the metallophosphoesterase superfamily. MPPE1 family. In terms of assembly, interacts with GPI-anchor proteins (via the GPI portion). Interacts with TMED10. The cofactor is Mn(2+).

The protein resides in the endoplasmic reticulum-Golgi intermediate compartment membrane. Functionally, metallophosphoesterase that catalyzes the removal of a side-chain ethanolamine-phosphate (EtNP) from the second mannose of the GPI-anchor protein intermediate. Participates in the glycan remodeling steps of GPI-anchor maturation to allow an efficient transport of GPI-anchor proteins from the endoplasmic reticulum to the Golgi. This Cricetulus griseus (Chinese hamster) protein is Metallophosphoesterase 1.